Reading from the N-terminus, the 390-residue chain is Altered inheritance of mitochondria protein 6 (390 aa).

The first 26 residues, 1-26 (MLGLKGCLTILIGYVIAVCALFSSRG), serve as a signal peptide directing secretion.

The protein belongs to the AIM6 family.

This chain is Altered inheritance of mitochondria protein 6 (AIM6), found in Saccharomyces cerevisiae (strain YJM789) (Baker's yeast).